The primary structure comprises 451 residues: Trigger factor (451 aa).

Residues 163 to 248 (GDIIDMEYTV…IKALYVNILP (86 aa)) enclose the PPIase FKBP-type domain.

It belongs to the FKBP-type PPIase family. Tig subfamily.

It localises to the cytoplasm. It catalyses the reaction [protein]-peptidylproline (omega=180) = [protein]-peptidylproline (omega=0). In terms of biological role, involved in protein export. Acts as a chaperone by maintaining the newly synthesized protein in an open conformation. Functions as a peptidyl-prolyl cis-trans isomerase. In Leptospira borgpetersenii serovar Hardjo-bovis (strain JB197), this protein is Trigger factor.